We begin with the raw amino-acid sequence, 453 residues long: Bifunctional protein GlmU (453 aa).

Positions 1–226 (MAFSVVILAA…EIEVEGINNR (226 aa)) are pyrophosphorylase. UDP-N-acetyl-alpha-D-glucosamine-binding positions include 8 to 11 (LAAG), Lys-22, Gln-73, and 78 to 79 (GT). Asp-102 serves as a coordination point for Mg(2+). UDP-N-acetyl-alpha-D-glucosamine-binding residues include Gly-137, Glu-151, Asn-166, and Asn-224. A Mg(2+)-binding site is contributed by Asn-224. The tract at residues 227–247 (KQLAAIERAFQFEQAQELMMQ) is linker. The interval 248–453 (GVSLLDPHRF…SGWQRPTKPE (206 aa)) is N-acetyltransferase. Arg-330 and Lys-348 together coordinate UDP-N-acetyl-alpha-D-glucosamine. Catalysis depends on His-360, which acts as the Proton acceptor. UDP-N-acetyl-alpha-D-glucosamine contacts are provided by Tyr-363 and Asn-374. Acetyl-CoA-binding positions include Ala-377, 383–384 (NY), Ser-402, Ala-420, and Arg-437.

The protein in the N-terminal section; belongs to the N-acetylglucosamine-1-phosphate uridyltransferase family. This sequence in the C-terminal section; belongs to the transferase hexapeptide repeat family. As to quaternary structure, homotrimer. Mg(2+) serves as cofactor.

The protein resides in the cytoplasm. The catalysed reaction is alpha-D-glucosamine 1-phosphate + acetyl-CoA = N-acetyl-alpha-D-glucosamine 1-phosphate + CoA + H(+). It carries out the reaction N-acetyl-alpha-D-glucosamine 1-phosphate + UTP + H(+) = UDP-N-acetyl-alpha-D-glucosamine + diphosphate. The protein operates within nucleotide-sugar biosynthesis; UDP-N-acetyl-alpha-D-glucosamine biosynthesis; N-acetyl-alpha-D-glucosamine 1-phosphate from alpha-D-glucosamine 6-phosphate (route II): step 2/2. Its pathway is nucleotide-sugar biosynthesis; UDP-N-acetyl-alpha-D-glucosamine biosynthesis; UDP-N-acetyl-alpha-D-glucosamine from N-acetyl-alpha-D-glucosamine 1-phosphate: step 1/1. It participates in bacterial outer membrane biogenesis; LPS lipid A biosynthesis. Functionally, catalyzes the last two sequential reactions in the de novo biosynthetic pathway for UDP-N-acetylglucosamine (UDP-GlcNAc). The C-terminal domain catalyzes the transfer of acetyl group from acetyl coenzyme A to glucosamine-1-phosphate (GlcN-1-P) to produce N-acetylglucosamine-1-phosphate (GlcNAc-1-P), which is converted into UDP-GlcNAc by the transfer of uridine 5-monophosphate (from uridine 5-triphosphate), a reaction catalyzed by the N-terminal domain. This chain is Bifunctional protein GlmU, found in Pseudoalteromonas atlantica (strain T6c / ATCC BAA-1087).